A 303-amino-acid polypeptide reads, in one-letter code: UDP-3-O-acyl-N-acetylglucosamine deacetylase (303 aa).

Zn(2+) is bound by residues His-78, His-237, and Asp-241. His-264 functions as the Proton donor in the catalytic mechanism.

The protein belongs to the LpxC family. It depends on Zn(2+) as a cofactor.

It catalyses the reaction a UDP-3-O-[(3R)-3-hydroxyacyl]-N-acetyl-alpha-D-glucosamine + H2O = a UDP-3-O-[(3R)-3-hydroxyacyl]-alpha-D-glucosamine + acetate. Its pathway is glycolipid biosynthesis; lipid IV(A) biosynthesis; lipid IV(A) from (3R)-3-hydroxytetradecanoyl-[acyl-carrier-protein] and UDP-N-acetyl-alpha-D-glucosamine: step 2/6. Catalyzes the hydrolysis of UDP-3-O-myristoyl-N-acetylglucosamine to form UDP-3-O-myristoylglucosamine and acetate, the committed step in lipid A biosynthesis. The sequence is that of UDP-3-O-acyl-N-acetylglucosamine deacetylase from Xanthomonas axonopodis pv. citri (strain 306).